A 305-amino-acid chain; its full sequence is UDP-3-O-acyl-N-acetylglucosamine deacetylase (305 aa).

Zn(2+)-binding residues include histidine 79, histidine 238, and aspartate 242. Catalysis depends on histidine 265, which acts as the Proton donor.

This sequence belongs to the LpxC family. The cofactor is Zn(2+).

The enzyme catalyses a UDP-3-O-[(3R)-3-hydroxyacyl]-N-acetyl-alpha-D-glucosamine + H2O = a UDP-3-O-[(3R)-3-hydroxyacyl]-alpha-D-glucosamine + acetate. It participates in glycolipid biosynthesis; lipid IV(A) biosynthesis; lipid IV(A) from (3R)-3-hydroxytetradecanoyl-[acyl-carrier-protein] and UDP-N-acetyl-alpha-D-glucosamine: step 2/6. Catalyzes the hydrolysis of UDP-3-O-myristoyl-N-acetylglucosamine to form UDP-3-O-myristoylglucosamine and acetate, the committed step in lipid A biosynthesis. The protein is UDP-3-O-acyl-N-acetylglucosamine deacetylase of Escherichia fergusonii (strain ATCC 35469 / DSM 13698 / CCUG 18766 / IAM 14443 / JCM 21226 / LMG 7866 / NBRC 102419 / NCTC 12128 / CDC 0568-73).